Here is a 436-residue protein sequence, read N- to C-terminus: T-box transcription factor TBX6 (436 aa).

The tract at residues 67–87 (PLLPSALGPETAPPPPEALHS) is disordered. A DNA-binding region (T-box) is located at residues 100–273 (LWKEFSAVGT…ANPFAKGFRE (174 aa)). Basic and acidic residues predominate over residues 275–284 (GRNCKRERDA). Disordered regions lie at residues 275–344 (GRNC…CGGP) and 360–383 (PSHLPARTPSFPEAPDPGRPAPYS). Over residues 332 to 344 (EAASASAPPCGGP) the composition is skewed to low complexity.

It localises to the nucleus. Functionally, T-box transcription factor that plays an essential role in the determination of the fate of axial stem cells: neural vs mesodermal. Acts in part by down-regulating, a specific enhancer (N1) of SOX2, to inhibit neural development. Seems to also play an essential role in left/right axis determination and acts through effects on Notch signaling around the node as well as through an effect on the morphology and motility of the nodal cilia. This is T-box transcription factor TBX6 (Tbx6) from Rattus norvegicus (Rat).